The chain runs to 378 residues: Tafazzin (378 aa).

The Mitochondrial intermembrane segment spans residues 1–137; sequence MFMVVCSNLR…RLRNPSKFWY (137 aa). Residues 46–112 form a disordered region; that stretch reads APEARPVPDE…DQDADPSLDV (67 aa). Residues 51 to 67 are compositionally biased toward basic and acidic residues; it reads PVPDERYPGSQQDRKDI. The stretch at 138-158 is an intramembrane region; the sequence is VVSQFVVSAVGIFSKVVLMFL. Over 159–378 the chain is Mitochondrial intermembrane; sequence NKPRVYNRER…ETEKLHRERN (220 aa). The short motif at 188–193 is the HXXXXD motif element; that stretch reads HYSCFD.

Belongs to the taffazin family. As to quaternary structure, associates with multiple protein complexes. Association with large protein complexes occurs only in the presence of cardiolipin.

It localises to the mitochondrion outer membrane. It is found in the mitochondrion inner membrane. The protein resides in the mitochondrion. Its subcellular location is the mitochondrion membrane. The protein localises to the golgi apparatus membrane. It localises to the endoplasmic reticulum membrane. It catalyses the reaction 1'-[1,2-diacyl-sn-glycero-3-phospho],3'-[1-acyl-sn-glycero-3-phospho]-glycerol + a 1,2-diacyl-sn-glycero-3-phosphocholine = a cardiolipin + a 1-acyl-sn-glycero-3-phosphocholine. The catalysed reaction is 1'-[1,2-di-(9Z,12Z-octadecadienoyl)-sn-glycero-3-phospho]-3'-[1-(9Z,12Z-octadecadienoyl)-sn-glycero-3-phospho]-glycerol + 1-hexadecanoyl-2-(9Z,12Z-octadecadienoyl)-sn-glycero-3-phosphocholine = 1',3'-bis-[1,2-di-(9Z,12Z-octadecadienoyl)-sn-glycero-3-phospho]-glycerol + 1-hexadecanoyl-sn-glycero-3-phosphocholine. It carries out the reaction 1'-[1,2-di-(9Z,12Z-octadecadienoyl)-sn-glycero-3-phospho]-3'-[2-(9Z,12Z-octadecadienoyl)-sn-glycero-3-phospho]-glycerol + 1-hexadecanoyl-2-(9Z,12Z-octadecadienoyl)-sn-glycero-3-phosphocholine = 1',3'-bis-[1,2-di-(9Z,12Z-octadecadienoyl)-sn-glycero-3-phospho]-glycerol + 1-hexadecanoyl-sn-glycero-3-phosphocholine. The enzyme catalyses 1,2-di-(9Z,12Z-octadecadienoyl)-sn-glycero-3-phosphocholine + 1'-[1,2-di-(9Z,12Z-octadecadienoyl)-sn-glycero-3-phospho]-3'-[1-(9Z,12Z-octadecadienoyl)-sn-glycero-3-phospho]-glycerol = 1-(9Z,12Z)-octadecadienoyl-sn-glycero-3-phosphocholine + 1',3'-bis-[1,2-di-(9Z,12Z-octadecadienoyl)-sn-glycero-3-phospho]-glycerol. It catalyses the reaction 1-tetradecanoyl-sn-glycero-3-phosphocholine + 1',3'-bis-[1,2-di-(9Z,12Z-octadecadienoyl)-sn-glycero-3-phospho]-glycerol = 1-tetradecanoyl-2-(9Z,12Z-octadecadienoyl)-sn-glycero-3-phosphocholine + 1'-[1,2-di-(9Z,12Z-octadecadienoyl)-sn-glycero-3-phospho]-3'-[1-(9Z,12Z-octadecadienoyl)-sn-glycero-3-phospho]-glycerol. The catalysed reaction is 1',3'-bis[1,2-di-(9Z-octadecenoyl)-sn-glycero-3-phospho]-glycerol + 1-nonadecanoyl-sn-glycero-3-phosphocholine = 1-nonadecanoyl-2-(9Z-octadecenoyl)-sn-glycero-3-phosphocholine + 1'-[1,2-di-(9Z-octadecenoyl)-sn-glycero-3-phospho]-3'-[1-(9Z-octadecenoyl)-sn-glycero-3-phospho]-glycerol. It carries out the reaction a 1,2-diacyl-sn-glycero-3-phospho-(1'-sn-glycerol) + a 1-acyl-sn-glycero-3-phosphocholine = 1-acyl-sn-glycero-3-phospho-(1'-sn-glycerol) + a 1,2-diacyl-sn-glycero-3-phosphocholine. The enzyme catalyses 1-hexadecanoyl-2-(9Z,12Z-octadecadienoyl)-sn-glycero-3-phospho-(1'-sn-glycerol) + 1-hexadecanoyl-sn-glycero-3-phosphocholine = 1-hexadecanoyl-sn-glycero-3-phospho-(1'-sn-glycerol) + 1-hexadecanoyl-2-(9Z,12Z-octadecadienoyl)-sn-glycero-3-phosphocholine. It catalyses the reaction 1,2-di-(9Z-octadecenoyl)-sn-glycero-3-phospho-(1'-sn-glycerol) + 1-nonadecanoyl-sn-glycero-3-phosphocholine = 1-nonadecanoyl-2-(9Z-octadecenoyl)-sn-glycero-3-phosphocholine + 1-(9Z-octadecenoyl)-sn-glycero-3-phospho-(1'-sn-glycerol). The catalysed reaction is a 1,2-diacyl-sn-glycero-3-phosphate + a 1-acyl-sn-glycero-3-phosphocholine = a 1-acyl-sn-glycero-3-phosphate + a 1,2-diacyl-sn-glycero-3-phosphocholine. It carries out the reaction 1-hexadecanoyl-2-(9Z,12Z-octadecadienoyl)-sn-glycero-3-phosphate + 1-hexadecanoyl-sn-glycero-3-phosphocholine = 1-hexadecanoyl-2-(9Z,12Z-octadecadienoyl)-sn-glycero-3-phosphocholine + 1-hexadecanoyl-sn-glycero-3-phosphate. The enzyme catalyses 1-hexadecanoyl-2-(9Z,12Z-octadecadienoyl)-sn-glycero-3-phosphocholine + 1-(9Z-octadecenoyl)-sn-glycero-3-phosphate = 1-(9Z)-octadecenoyl-2-(9Z,12Z)-octadecadienoyl-sn-glycero-3-phosphate + 1-hexadecanoyl-sn-glycero-3-phosphocholine. It catalyses the reaction a 1-acyl-sn-glycero-3-phosphocholine + a 1,2-diacyl-sn-glycero-3-phosphoethanolamine = a 1-acyl-sn-glycero-3-phosphoethanolamine + a 1,2-diacyl-sn-glycero-3-phosphocholine. The catalysed reaction is 1-hexadecanoyl-2-(9Z,12Z-octadecadienoyl)-sn-glycero-3-phosphoethanolamine + 1-hexadecanoyl-sn-glycero-3-phosphocholine = 1-hexadecanoyl-2-(9Z,12Z-octadecadienoyl)-sn-glycero-3-phosphocholine + 1-hexadecanoyl-sn-glycero-3-phosphoethanolamine. It carries out the reaction 1,2-di-(9Z,12Z-octadecadienoyl)-sn-glycero-3-phosphoethanolamine + 1-tetradecanoyl-sn-glycero-3-phosphocholine = 1-(9Z,12Z-octadecadienoyl)-sn-glycero-3-phosphoethanolamine + 1-tetradecanoyl-2-(9Z,12Z-octadecadienoyl)-sn-glycero-3-phosphocholine. The enzyme catalyses 1'-[1,2-diacyl-sn-glycero-3-phospho],3'-[1-acyl-sn-glycero-3-phospho]-glycerol + a 1,2-diacyl-sn-glycero-3-phosphoethanolamine = a cardiolipin + a 1-acyl-sn-glycero-3-phosphoethanolamine. It catalyses the reaction 1-hexadecanoyl-2-(9Z,12Z-octadecadienoyl)-sn-glycero-3-phosphoethanolamine + 1'-[1,2-di-(9Z,12Z-octadecadienoyl)-sn-glycero-3-phospho]-3'-[1-(9Z,12Z-octadecadienoyl)-sn-glycero-3-phospho]-glycerol = 1',3'-bis-[1,2-di-(9Z,12Z-octadecadienoyl)-sn-glycero-3-phospho]-glycerol + 1-hexadecanoyl-sn-glycero-3-phosphoethanolamine. The catalysed reaction is 1'-[1-(9Z,12Z-octadecadienoyl)-2-(9Z-octadecenoyl)-sn-glycero-3-phospho]-3'-[1-(9Z,12Z-octadecadienoyl)-sn-glycero-3-phospho]-glycerol + 1',3'-bis-[1,2-di-(9Z,12Z-octadecadienoyl)-sn-glycero-3-phospho]-glycerol = 1'-[1,2-di-(9Z,12Z-octadecadienoyl)-sn-glycero-3-phospho]-3'-[1-(9Z,12Z-octadecadienoyl)-2-(9Z-octadecenoyl)-sn-glycero-3-phospho]-glycerol + 1'-[1,2-di-(9Z,12Z-octadecadienoyl)-sn-glycero-3-phospho]-3'-[1-(9Z,12Z-octadecadienoyl)-sn-glycero-3-phospho]-glycerol. It carries out the reaction 1,2-di-(9Z-hexadecenoyl)-sn-glycero-3-phosphocholine + 1-hexadecanoyl-sn-glycero-3-phosphocholine = 1-hexadecanoyl-2-(9Z-hexadecenoyl)-sn-glycero-3-phosphocholine + 1-(9Z-hexadecenoyl)-sn-glycero-3-phosphocholine. The enzyme catalyses 1,2-dioctadecanoyl-sn-glycero-3-phosphocholine + 1-hexadecanoyl-sn-glycero-3-phosphocholine = 1-hexadecanoyl-2-octadecanoyl-sn-glycero-3-phosphocholine + 1-octadecanoyl-sn-glycero-3-phosphocholine. It catalyses the reaction 1,2-di-(9Z-octadecenoyl)-sn-glycero-3-phosphocholine + 1-hexadecanoyl-sn-glycero-3-phosphocholine = 1-hexadecanoyl-2-(9Z-octadecenoyl)-sn-glycero-3-phosphocholine + 1-(9Z-octadecenoyl)-sn-glycero-3-phosphocholine. The catalysed reaction is 1,2-di-(9Z,12Z-octadecadienoyl)-sn-glycero-3-phosphocholine + 1-(9Z-octadecenoyl)-sn-glycero-3-phosphocholine = 1-(9Z)-octadecenoyl-2-(9Z,12Z)-octadecadienoyl-sn-glycero-3-phosphocholine + 1-(9Z,12Z)-octadecadienoyl-sn-glycero-3-phosphocholine. It carries out the reaction 1,2-di-(9Z,12Z,15Z-octadecatrienoyl)-sn-glycero-3-phosphocholine + 1-tetradecanoyl-sn-glycero-3-phosphocholine = 1-tetradecanoyl-2-(9Z,12Z,15Z-octadecatrienoyl)-sn-glycero-3-phosphocholine + 1-(9Z,12Z,15Z-octadecatrienoyl)-sn-glycero-3-phosphocholine. The enzyme catalyses 1-nonadecanoyl-sn-glycero-3-phosphocholine + 1-octadecanoyl-2-(9Z-octadecenoyl)-sn-glycero-3-phosphocholine = 1-nonadecanoyl-2-(9Z-octadecenoyl)-sn-glycero-3-phosphocholine + 1-octadecanoyl-sn-glycero-3-phosphocholine. It catalyses the reaction 1-(9Z)-octadecenoyl-2-octadecanoyl-sn-glycero-3-phosphocholine + 1-nonadecanoyl-sn-glycero-3-phosphocholine = 2-octadecanoyl-sn-glycero-3-phosphocholine + 1-nonadecanoyl-2-(9Z-octadecenoyl)-sn-glycero-3-phosphocholine. The protein operates within phospholipid metabolism. In terms of biological role, acyltransferase required to remodel newly synthesized phospholipid cardiolipin (1',3'-bis-[1,2-diacyl-sn-glycero-3-phospho]-glycerol or CL), a key component of the mitochondrial inner membrane, with tissue specific acyl chains necessary for adequate mitochondrial function. Its role in cellular physiology is to improve mitochondrial performance. CL is critical for the coassembly of lipids and proteins in mitochondrial membranes. For instance, remodeling of the acyl groups of CL in the mitochondrial inner membrane affects the assembly and stability of respiratory chain complex IV and its supercomplex forms. Catalyzes the transacylation between phospholipids and lysophospholipids, with the highest rate being between phosphatidylcholine (1,2-diacyl-sn-glycero-3-phosphocholine or PC) and CL. Catalyzes both 1-acyl-sn-glycero-3-phosphocholine (lysophosphatidylcholine or LPC) reacylation and PC-CL transacylation, that means, it exchanges acyl groups between CL and PC by a combination of forward and reverse transacylations. Also catalyzes transacylations between other phospholipids such as phosphatidylethanolamine (1,2-diacyl-sn-glycero-3-phosphoethanolamine or PE) and CL, between PC and PE, and between PC and phosphatidate (1,2-diacyl-sn-glycero-3-phosphate or PA), although at lower rate. Not regiospecific, it transfers acyl groups into any of the sn-1 and sn-2 positions of the monolysocardiolipin (MLCL), which is an important prerequisite for uniformity and symmetry in CL acyl distribution. Cannot transacylate dilysocardiolipin (DLCL), thus, the role of MLCL is limited to that of an acyl acceptor. CoA-independent, it can reshuffle molecular species within a single phospholipid class. Redistributes fatty acids between MLCL, CL, and other lipids, which prolongs the half-life of CL. Its action is completely reversible, which allows for cyclic changes, such as fission and fusion or bending and flattening of the membrane. Hence, by contributing to the flexibility of the lipid composition, it plays an important role in the dynamics of mitochondria membranes. Essential for the final stage of spermatogenesis, spermatid individualization. Required for the initiation of mitophagy. This is Tafazzin from Drosophila melanogaster (Fruit fly).